A 558-amino-acid polypeptide reads, in one-letter code: Membrane transporter D2 (558 aa).

The tract at residues methionine 1–leucine 28 is disordered. Residues methionine 1–asparagine 38 lie on the Cytoplasmic side of the membrane. The chain crosses the membrane as a helical span at residues leucine 39–valine 59. Residues glycine 60 to glycine 152 are Extracellular-facing. Residues valine 153 to threonine 173 traverse the membrane as a helical segment. At lysine 174 to cysteine 179 the chain is on the cytoplasmic side. Residues lysine 180–threonine 200 form a helical membrane-spanning segment. At glycine 201–histidine 204 the chain is on the extracellular side. The helical transmembrane segment at tyrosine 205–threonine 225 threads the bilayer. Topologically, residues serine 226–threonine 241 are cytoplasmic. A helical transmembrane segment spans residues leucine 242–leucine 262. Residues valine 263 to arginine 281 are Extracellular-facing. A helical transmembrane segment spans residues methionine 282–isoleucine 302. Residues threonine 303–glutamine 335 are Cytoplasmic-facing. The chain crosses the membrane as a helical span at residues methionine 336–asparagine 356. At alanine 357–proline 373 the chain is on the extracellular side. A helical transmembrane segment spans residues leucine 374–leucine 394. Over serine 395–threonine 402 the chain is Cytoplasmic. A helical membrane pass occupies residues leucine 403–valine 423. The Extracellular portion of the chain corresponds to tyrosine 424–glycine 441. A helical membrane pass occupies residues isoleucine 442–aspartate 463. The Cytoplasmic portion of the chain corresponds to valine 464–valine 478. Residues glycine 479–isoleucine 499 form a helical membrane-spanning segment. At serine 500–alanine 512 the chain is on the extracellular side. The chain crosses the membrane as a helical span at residues valine 513–leucine 533. The Cytoplasmic segment spans residues glutamine 534–aspartate 558.

It belongs to the major facilitator superfamily. Sugar transporter (TC 2.A.1.1) family.

The protein localises to the membrane. This is Membrane transporter D2 from Leishmania donovani.